Consider the following 293-residue polypeptide: ATP synthase gamma chain (293 aa).

This sequence belongs to the ATPase gamma chain family. In terms of assembly, F-type ATPases have 2 components, CF(1) - the catalytic core - and CF(0) - the membrane proton channel. CF(1) has five subunits: alpha(3), beta(3), gamma(1), delta(1), epsilon(1). CF(0) has three main subunits: a, b and c.

The protein resides in the cell membrane. In terms of biological role, produces ATP from ADP in the presence of a proton gradient across the membrane. The gamma chain is believed to be important in regulating ATPase activity and the flow of protons through the CF(0) complex. In Streptococcus agalactiae serotype Ia (strain ATCC 27591 / A909 / CDC SS700), this protein is ATP synthase gamma chain.